The primary structure comprises 295 residues: Trimeric intracellular cation channel type A (295 aa).

Over 1-18 (MELLSALSLGELALSFSR) the chain is Lumenal. The chain crosses the membrane as a helical span at residues 19 to 39 (VPLFPVFDLSYFIVSILYLKY). The Cytoplasmic segment spans residues 40 to 51 (EPGAVELSRRHP). The chain crosses the membrane as a helical span at residues 52–72 (VASWLCAMLHCFGSYILADLL). Over 73-85 (LGEPLIDYFSNNS) the chain is Lumenal. Glycine 74 provides a ligand contact to Ca(2+). The helical transmembrane segment at 86-106 (SILLASAVWYLIFFCPLDLFY) threads the bilayer. The Cytoplasmic segment spans residues 107–144 (KCVCFLPVKLIFVAMKEVVRVRKIAVGIHHAHHHYHHG). 2 residues coordinate a 1,2-diacyl-sn-glycero-3-phospho-(1D-myo-inositol-4,5-bisphosphate): lysine 122 and arginine 126. A helical transmembrane segment spans residues 145 to 165 (WFIMIATGWVKGSGVALLSNV). The Lumenal segment spans residues 166–178 (EQLLRGVWKPETN). Residues 179-199 (EILHMSFPTKASLYGAILFTL) traverse the membrane as a helical segment. The Cytoplasmic segment spans residues 200–209 (QQTRWLPVSK). A helical transmembrane segment spans residues 210 to 230 (ASLIFIFTMFMVSCKVFLTAT). Residues 231-234 (HSHS) lie on the Lumenal side of the membrane. A helical membrane pass occupies residues 235-255 (SPFDVLEAYVCPVLFGTGSGG). At 256–295 (DHPQDNHGAWPGGPPSGALATKSKEELSEGSRKKKTKKAD) the chain is on the cytoplasmic side. The interval 256–295 (DHPQDNHGAWPGGPPSGALATKSKEELSEGSRKKKTKKAD) is disordered. Residues 277-286 (KSKEELSEGS) show a composition bias toward basic and acidic residues.

It belongs to the TMEM38 family. Homotrimer; conformation seems to be controled by binding to diacylglycerol (DAG).

It localises to the sarcoplasmic reticulum membrane. Its subcellular location is the nucleus membrane. The catalysed reaction is K(+)(in) = K(+)(out). Its activity is regulated as follows. Channel activity is activated by a change of voltage within the sarcoplasmic reticulum lumen and blocked by luminal high Ca(2+) levels. Functionally, intracellular monovalent cation channel required for maintenance of rapid intracellular calcium release. Acts as a potassium counter-ion channel that functions in synchronization with calcium release from intracellular stores. Opened by a change of voltage within the sarcoplasmic reticulum lumen. This is Trimeric intracellular cation channel type A from Oryctolagus cuniculus (Rabbit).